Reading from the N-terminus, the 148-residue chain is Ribonuclease H (148 aa).

An RNase H type-1 domain is found at Met-1–Asp-142. Mg(2+) is bound by residues Asp-10, Glu-48, Asp-70, and Asp-134.

It belongs to the RNase H family. In terms of assembly, monomer. The cofactor is Mg(2+).

Its subcellular location is the cytoplasm. The enzyme catalyses Endonucleolytic cleavage to 5'-phosphomonoester.. Functionally, endonuclease that specifically degrades the RNA of RNA-DNA hybrids. The chain is Ribonuclease H from Pseudomonas putida (strain ATCC 700007 / DSM 6899 / JCM 31910 / BCRC 17059 / LMG 24140 / F1).